Reading from the N-terminus, the 427-residue chain is Trigger factor (427 aa).

One can recognise a PPIase FKBP-type domain in the interval 163–248 (GNIAIIDFKG…VKGIKVKELP (86 aa)).

This sequence belongs to the FKBP-type PPIase family. Tig subfamily.

Its subcellular location is the cytoplasm. The enzyme catalyses [protein]-peptidylproline (omega=180) = [protein]-peptidylproline (omega=0). Functionally, involved in protein export. Acts as a chaperone by maintaining the newly synthesized protein in an open conformation. Functions as a peptidyl-prolyl cis-trans isomerase. The protein is Trigger factor of Clostridium botulinum (strain Alaska E43 / Type E3).